The chain runs to 224 residues: UPF0111 protein CPn_0681/CP_0066/CPj0681/CpB0708 (224 aa).

It belongs to the UPF0111 family.

In Chlamydia pneumoniae (Chlamydophila pneumoniae), this protein is UPF0111 protein CPn_0681/CP_0066/CPj0681/CpB0708.